The chain runs to 620 residues: Chaperone protein HscA homolog (620 aa).

This sequence belongs to the heat shock protein 70 family.

Its function is as follows. Chaperone involved in the maturation of iron-sulfur cluster-containing proteins. Has a low intrinsic ATPase activity which is markedly stimulated by HscB. This chain is Chaperone protein HscA homolog, found in Herminiimonas arsenicoxydans.